A 160-amino-acid polypeptide reads, in one-letter code: Ribosomal RNA large subunit methyltransferase H (160 aa).

S-adenosyl-L-methionine contacts are provided by residues Leu-77, Gly-109, and 128–133 (FSRLTF).

It belongs to the RNA methyltransferase RlmH family. As to quaternary structure, homodimer.

Its subcellular location is the cytoplasm. It carries out the reaction pseudouridine(1915) in 23S rRNA + S-adenosyl-L-methionine = N(3)-methylpseudouridine(1915) in 23S rRNA + S-adenosyl-L-homocysteine + H(+). Functionally, specifically methylates the pseudouridine at position 1915 (m3Psi1915) in 23S rRNA. The chain is Ribosomal RNA large subunit methyltransferase H from Desulfitobacterium hafniense (strain DSM 10664 / DCB-2).